A 143-amino-acid polypeptide reads, in one-letter code: Putative pre-16S rRNA nuclease (143 aa).

The protein belongs to the YqgF nuclease family.

It localises to the cytoplasm. Could be a nuclease involved in processing of the 5'-end of pre-16S rRNA. The polypeptide is Putative pre-16S rRNA nuclease (Leuconostoc citreum (strain KM20)).